Consider the following 287-residue polypeptide: Phosphatidylserine decarboxylase proenzyme (287 aa).

Active-site charge relay system; for autoendoproteolytic cleavage activity residues include Asp90, His147, and Ser253. The active-site Schiff-base intermediate with substrate; via pyruvic acid; for decarboxylase activity is Ser253. Ser253 is modified (pyruvic acid (Ser); by autocatalysis).

Belongs to the phosphatidylserine decarboxylase family. PSD-B subfamily. Prokaryotic type I sub-subfamily. Heterodimer of a large membrane-associated beta subunit and a small pyruvoyl-containing alpha subunit. Pyruvate is required as a cofactor. In terms of processing, is synthesized initially as an inactive proenzyme. Formation of the active enzyme involves a self-maturation process in which the active site pyruvoyl group is generated from an internal serine residue via an autocatalytic post-translational modification. Two non-identical subunits are generated from the proenzyme in this reaction, and the pyruvate is formed at the N-terminus of the alpha chain, which is derived from the carboxyl end of the proenzyme. The autoendoproteolytic cleavage occurs by a canonical serine protease mechanism, in which the side chain hydroxyl group of the serine supplies its oxygen atom to form the C-terminus of the beta chain, while the remainder of the serine residue undergoes an oxidative deamination to produce ammonia and the pyruvoyl prosthetic group on the alpha chain. During this reaction, the Ser that is part of the protease active site of the proenzyme becomes the pyruvoyl prosthetic group, which constitutes an essential element of the active site of the mature decarboxylase.

The protein resides in the cell membrane. It catalyses the reaction a 1,2-diacyl-sn-glycero-3-phospho-L-serine + H(+) = a 1,2-diacyl-sn-glycero-3-phosphoethanolamine + CO2. It participates in phospholipid metabolism; phosphatidylethanolamine biosynthesis; phosphatidylethanolamine from CDP-diacylglycerol: step 2/2. Functionally, catalyzes the formation of phosphatidylethanolamine (PtdEtn) from phosphatidylserine (PtdSer). The sequence is that of Phosphatidylserine decarboxylase proenzyme from Aliivibrio salmonicida (strain LFI1238) (Vibrio salmonicida (strain LFI1238)).